The chain runs to 167 residues: uncharacterized protein (167 aa).

A run of 2 helical transmembrane segments spans residues 21–41 and 87–107; these read KIGLAIFLIGAFINLIHIYKP and MIITFILVQTTLITLDLYVFG. Residues 136-159 are compositionally biased toward basic and acidic residues; that stretch reads RKQRLKEQREKKEQKKEQKKEKKT. The segment at 136-167 is disordered; it reads RKQRLKEQREKKEQKKEQKKEKKTERRKKKKL.

The protein localises to the membrane. This is an uncharacterized protein from Schizosaccharomyces pombe (strain 972 / ATCC 24843) (Fission yeast).